Here is a 643-residue protein sequence, read N- to C-terminus: 1-deoxy-D-xylulose-5-phosphate synthase (643 aa).

Thiamine diphosphate-binding positions include H78 and 119–121 (AHS). D150 is a binding site for Mg(2+). Thiamine diphosphate is bound by residues 151 to 152 (GA), N179, Y288, and E370. Position 179 (N179) interacts with Mg(2+).

Belongs to the transketolase family. DXPS subfamily. In terms of assembly, homodimer. The cofactor is Mg(2+). Thiamine diphosphate serves as cofactor.

The enzyme catalyses D-glyceraldehyde 3-phosphate + pyruvate + H(+) = 1-deoxy-D-xylulose 5-phosphate + CO2. Its pathway is metabolic intermediate biosynthesis; 1-deoxy-D-xylulose 5-phosphate biosynthesis; 1-deoxy-D-xylulose 5-phosphate from D-glyceraldehyde 3-phosphate and pyruvate: step 1/1. Functionally, catalyzes the acyloin condensation reaction between C atoms 2 and 3 of pyruvate and glyceraldehyde 3-phosphate to yield 1-deoxy-D-xylulose-5-phosphate (DXP). This chain is 1-deoxy-D-xylulose-5-phosphate synthase, found in Xanthobacter autotrophicus (strain ATCC BAA-1158 / Py2).